The sequence spans 817 residues: RecQ-mediated genome instability protein 1 (817 aa).

Disordered regions lie at residues 1–203 (MRRR…SALS) and 595–639 (ISAS…SNVD). The segment covering 24 to 41 (ATASTPASASASASFPSV) has biased composition (low complexity). The span at 77–115 (ISDEEEAEAEVVVEEEEVVVVEDEEEEYEEVEEIEDPDG) shows a compositional bias: acidic residues. 3 stretches are compositionally biased toward pro residues: residues 126–157 (ISPP…PPVP), 165–175 (ARTPTPTPSAP), and 184–196 (AGTP…PPSS). The segment covering 625–638 (TGTRSGEATRSSNV) has biased composition (polar residues).

This sequence belongs to the RMI1 family. Component of the RMI complex, containing at least TOP3A and RMI1.

Essential component of the RMI complex, a complex that plays an important role in the resolution step of homologous recombination, in a process called Holliday Junction dissolution, to limit DNA crossover formation in cells. The sequence is that of RecQ-mediated genome instability protein 1 (RMI1) from Oryza sativa subsp. japonica (Rice).